A 148-amino-acid chain; its full sequence is Snaclec jerdonuxin subunit beta (148 aa).

An N-terminal signal peptide occupies residues 1-23; it reads MVRFIFVSFGLLVVFLSLSGIGA. Cystine bridges form between Cys-27–Cys-38, Cys-55–Cys-144, and Cys-121–Cys-136. Residues 34–145 form the C-type lectin domain; that stretch reads YDEHCYQVFQ…CSSKRYIVCK (112 aa).

The protein belongs to the snaclec family. In terms of assembly, tetramer of 4 heterodimers of alpha and beta subunits; disulfide-linked. Expressed by the venom gland.

Its subcellular location is the secreted. Snaclec that strongly induces platelet aggregation, in a dose-dependent manner. This is Snaclec jerdonuxin subunit beta from Protobothrops jerdonii (Jerdon's pitviper).